Here is a 564-residue protein sequence, read N- to C-terminus: MVLFIILAILVVILIAIGVLFYMRSNKRNLIEKTEERKNEIEQLPLDDNLRKLTGLNLKGETKTKYDAMKKDNTETTNKYLAPVEEKIQNAEELLEKFKFTAAQTEIDDAHELMDQYEENYQHQVTQVDDIINLHKENEALYEKCKVDYREMKRDVLANRHQFGEAAEPLENEIENYEPKLNEYENLKSEGNYVQAHNHIAALEDQIKNLKSYMDEIPELIRETQKELPGQFQDLKYGCRDLKVEGYDLDHVKVDGTIQSLKTELSFVEPMISRLELDEANNKLENINDKLDEMYDLIEYEVKAKNEVEETKDIITDDLFKAKDMNYTLQTEIEYVRENYYINESDAQSVRQFENEIQSLISVYDDILKETSKSAVRYSEVQDNLQYLEDHVSVINKEQDKLQNHLIQLREDEAEAEDNLLRVQSKKEEVYRRLLASNLTSVPERFIIMKNEIDNEVREVNEQFSERPIHVKQLKDKVAKIVIQMNTFEDEANDVLVNAVYAEKLIQYGNRYRKDHHHVDKSLNEAERLFKNNRYKRAIEIAEEALESVEPGITKHIEEQVIKE.

The Extracellular segment spans residues 1-4 (MVLF). The chain crosses the membrane as a helical span at residues 5–23 (IILAILVVILIAIGVLFYM). The Cytoplasmic portion of the chain corresponds to 24-564 (RSNKRNLIEK…KHIEEQVIKE (541 aa)). Coiled-coil stretches lie at residues 84–126 (VEEK…HQVT), 165–223 (EAAE…LIRE), 271–303 (MISRLELDEANNKLENINDKLDEMYDLIEYEVK), and 350–435 (VRQF…RRLL).

This sequence belongs to the EzrA family.

It localises to the cell membrane. In terms of biological role, negative regulator of FtsZ ring formation; modulates the frequency and position of FtsZ ring formation. Inhibits FtsZ ring formation at polar sites. Interacts either with FtsZ or with one of its binding partners to promote depolymerization. This chain is Septation ring formation regulator EzrA, found in Staphylococcus epidermidis (strain ATCC 35984 / DSM 28319 / BCRC 17069 / CCUG 31568 / BM 3577 / RP62A).